A 271-amino-acid polypeptide reads, in one-letter code: Type III pantothenate kinase (271 aa).

Residue Asp-6–Val-13 participates in ATP binding. A substrate-binding site is contributed by Gly-109–Arg-112. Asp-111 acts as the Proton acceptor in catalysis. Asp-131 serves as a coordination point for K(+). Ser-134 serves as a coordination point for ATP. Residue Thr-186 participates in substrate binding.

Belongs to the type III pantothenate kinase family. In terms of assembly, homodimer. NH4(+) serves as cofactor. K(+) is required as a cofactor.

The protein resides in the cytoplasm. The catalysed reaction is (R)-pantothenate + ATP = (R)-4'-phosphopantothenate + ADP + H(+). It participates in cofactor biosynthesis; coenzyme A biosynthesis; CoA from (R)-pantothenate: step 1/5. Functionally, catalyzes the phosphorylation of pantothenate (Pan), the first step in CoA biosynthesis. This is Type III pantothenate kinase from Mycolicibacterium vanbaalenii (strain DSM 7251 / JCM 13017 / BCRC 16820 / KCTC 9966 / NRRL B-24157 / PYR-1) (Mycobacterium vanbaalenii).